A 144-amino-acid polypeptide reads, in one-letter code: Ribosome-binding factor A (144 aa).

Residues 120 to 144 are disordered; sequence DKRRMAEAGREEDEAAPDDTTEDKA. A compositionally biased stretch (acidic residues) spans 129–144; it reads REEDEAAPDDTTEDKA.

Belongs to the RbfA family. Monomer. Binds 30S ribosomal subunits, but not 50S ribosomal subunits or 70S ribosomes.

The protein localises to the cytoplasm. Its function is as follows. One of several proteins that assist in the late maturation steps of the functional core of the 30S ribosomal subunit. Associates with free 30S ribosomal subunits (but not with 30S subunits that are part of 70S ribosomes or polysomes). Required for efficient processing of 16S rRNA. May interact with the 5'-terminal helix region of 16S rRNA. The chain is Ribosome-binding factor A from Aeromonas salmonicida (strain A449).